The chain runs to 94 residues: Co-chaperonin GroES (94 aa).

Belongs to the GroES chaperonin family. In terms of assembly, heptamer of 7 subunits arranged in a ring. Interacts with the chaperonin GroEL.

Its subcellular location is the cytoplasm. Its function is as follows. Together with the chaperonin GroEL, plays an essential role in assisting protein folding. The GroEL-GroES system forms a nano-cage that allows encapsulation of the non-native substrate proteins and provides a physical environment optimized to promote and accelerate protein folding. GroES binds to the apical surface of the GroEL ring, thereby capping the opening of the GroEL channel. In Tetragenococcus halophilus (Pediococcus halophilus), this protein is Co-chaperonin GroES.